The chain runs to 268 residues: F-actin-capping protein subunit alpha (268 aa).

N-acetylserine is present on Ser2. The residue at position 17 (Ser17) is a Phosphoserine.

Belongs to the F-actin-capping protein alpha subunit family. As to quaternary structure, component of the F-actin capping complex, composed of a heterodimer of an alpha and a beta subunit. Interacts with BSP1 (via C-terminus); leading to recruitment of the F-actin capping complex to actin cortical patches and the acomyosin contractile ring.

The protein localises to the cytoplasm. It is found in the cytoskeleton. Its subcellular location is the actin patch. In terms of biological role, F-actin-capping proteins bind in a Ca(2+)-independent manner to the fast growing ends of actin filaments (barbed end) thereby blocking the exchange of subunits at these ends. Unlike other capping proteins (such as gelsolin and severin), these proteins do not sever actin filaments. This chain is F-actin-capping protein subunit alpha (CAP1), found in Saccharomyces cerevisiae (strain ATCC 204508 / S288c) (Baker's yeast).